Consider the following 262-residue polypeptide: Acyl-[acyl-carrier-protein]--UDP-N-acetylglucosamine O-acyltransferase (262 aa).

Belongs to the transferase hexapeptide repeat family. LpxA subfamily. As to quaternary structure, homotrimer.

Its subcellular location is the cytoplasm. It carries out the reaction a (3R)-hydroxyacyl-[ACP] + UDP-N-acetyl-alpha-D-glucosamine = a UDP-3-O-[(3R)-3-hydroxyacyl]-N-acetyl-alpha-D-glucosamine + holo-[ACP]. It participates in glycolipid biosynthesis; lipid IV(A) biosynthesis; lipid IV(A) from (3R)-3-hydroxytetradecanoyl-[acyl-carrier-protein] and UDP-N-acetyl-alpha-D-glucosamine: step 1/6. Involved in the biosynthesis of lipid A, a phosphorylated glycolipid that anchors the lipopolysaccharide to the outer membrane of the cell. This is Acyl-[acyl-carrier-protein]--UDP-N-acetylglucosamine O-acyltransferase from Shigella flexneri serotype 5b (strain 8401).